The sequence spans 484 residues: GRIP domain-containing protein RUD3 (484 aa).

Basic residues predominate over residues Met-1 to His-15. Positions Met-1–Gly-75 are disordered. The span at Pro-16–Glu-30 shows a compositional bias: basic and acidic residues. Phosphoserine occurs at positions 55 and 64. The span at Lys-61–Val-72 shows a compositional bias: basic and acidic residues. The stretch at Leu-84–Ala-383 forms a coiled coil. Residues Ser-401–Ile-452 enclose the GRIP domain. Ser-468 is subject to Phosphoserine.

It localises to the golgi apparatus lumen. Functionally, involved in the structural organization of the cis-Golgi and in vesicle targeting/fusion stages of ER to Golgi transport. The polypeptide is GRIP domain-containing protein RUD3 (RUD3) (Saccharomyces cerevisiae (strain ATCC 204508 / S288c) (Baker's yeast)).